The following is a 120-amino-acid chain: Aspartate 1-decarboxylase (120 aa).

The active-site Schiff-base intermediate with substrate; via pyruvic acid is the S25. S25 is subject to Pyruvic acid (Ser). T57 contacts substrate. The active-site Proton donor is the Y58. 73 to 75 (GAA) lines the substrate pocket.

This sequence belongs to the PanD family. As to quaternary structure, heterooctamer of four alpha and four beta subunits. Pyruvate serves as cofactor. Is synthesized initially as an inactive proenzyme, which is activated by self-cleavage at a specific serine bond to produce a beta-subunit with a hydroxyl group at its C-terminus and an alpha-subunit with a pyruvoyl group at its N-terminus.

The protein localises to the cytoplasm. It catalyses the reaction L-aspartate + H(+) = beta-alanine + CO2. It participates in cofactor biosynthesis; (R)-pantothenate biosynthesis; beta-alanine from L-aspartate: step 1/1. In terms of biological role, catalyzes the pyruvoyl-dependent decarboxylation of aspartate to produce beta-alanine. This is Aspartate 1-decarboxylase from Cupriavidus taiwanensis (strain DSM 17343 / BCRC 17206 / CCUG 44338 / CIP 107171 / LMG 19424 / R1) (Ralstonia taiwanensis (strain LMG 19424)).